The chain runs to 303 residues: tRNA pseudouridine synthase B (303 aa).

D47 serves as the catalytic Nucleophile.

This sequence belongs to the pseudouridine synthase TruB family. Type 1 subfamily.

It carries out the reaction uridine(55) in tRNA = pseudouridine(55) in tRNA. In terms of biological role, responsible for synthesis of pseudouridine from uracil-55 in the psi GC loop of transfer RNAs. The protein is tRNA pseudouridine synthase B of Roseobacter denitrificans (strain ATCC 33942 / OCh 114) (Erythrobacter sp. (strain OCh 114)).